The sequence spans 486 residues: Malonate-semialdehyde dehydrogenase (486 aa).

Positions 154, 178, 181, 182, and 231 each coordinate NAD(+). The active-site Nucleophile is Cys-286. NAD(+) is bound at residue Glu-386.

This sequence belongs to the aldehyde dehydrogenase family. IolA subfamily. In terms of assembly, homotetramer.

The catalysed reaction is 3-oxopropanoate + NAD(+) + CoA + H2O = hydrogencarbonate + acetyl-CoA + NADH + H(+). It carries out the reaction 2-methyl-3-oxopropanoate + NAD(+) + CoA + H2O = propanoyl-CoA + hydrogencarbonate + NADH + H(+). Its pathway is polyol metabolism; myo-inositol degradation into acetyl-CoA; acetyl-CoA from myo-inositol: step 7/7. Functionally, catalyzes the oxidation of malonate semialdehyde (MSA) and methylmalonate semialdehyde (MMSA) into acetyl-CoA and propanoyl-CoA, respectively. Is involved in a myo-inositol catabolic pathway. Bicarbonate, and not CO2, is the end-product of the enzymatic reaction. This is Malonate-semialdehyde dehydrogenase from Bacillus cytotoxicus (strain DSM 22905 / CIP 110041 / 391-98 / NVH 391-98).